Consider the following 277-residue polypeptide: MPELPEVETVRRGLNQLTLNRKITGGDVLLHRTIAHPFSVGDFLNGITGDSISAWHRRGKYLLASTTSAAWLGVHLRMTGQLLWLNQDEPLHKHTRVRIFFEDQQELRFVDQRTFGQMWWVSSGMAVESVITGLAKLAVDPFSPEFTVEYLANKLHNRRRPIKTALLDQSVVAGLGNIYADEALFKSGVLPETLCTEVQLKQIELLRTAIIQVLETSIEAGGTTFSNFLNVKGVNGNYGGVAWVYNRAGEPCKVCGDVIQRIKLGGRSSHFCRQCQV.

The Schiff-base intermediate with DNA role is filled by P2. The active-site Proton donor is E3. The active-site Proton donor; for beta-elimination activity is the K60. Positions 94, 113, and 158 each coordinate DNA. The FPG-type zinc-finger motif lies at 243–277; that stretch reads WVYNRAGEPCKVCGDVIQRIKLGGRSSHFCRQCQV. Residue R267 is the Proton donor; for delta-elimination activity of the active site.

Belongs to the FPG family. In terms of assembly, monomer. The cofactor is Zn(2+).

It carries out the reaction Hydrolysis of DNA containing ring-opened 7-methylguanine residues, releasing 2,6-diamino-4-hydroxy-5-(N-methyl)formamidopyrimidine.. The catalysed reaction is 2'-deoxyribonucleotide-(2'-deoxyribose 5'-phosphate)-2'-deoxyribonucleotide-DNA = a 3'-end 2'-deoxyribonucleotide-(2,3-dehydro-2,3-deoxyribose 5'-phosphate)-DNA + a 5'-end 5'-phospho-2'-deoxyribonucleoside-DNA + H(+). In terms of biological role, involved in base excision repair of DNA damaged by oxidation or by mutagenic agents. Acts as a DNA glycosylase that recognizes and removes damaged bases. Has a preference for oxidized purines, such as 7,8-dihydro-8-oxoguanine (8-oxoG). Has AP (apurinic/apyrimidinic) lyase activity and introduces nicks in the DNA strand. Cleaves the DNA backbone by beta-delta elimination to generate a single-strand break at the site of the removed base with both 3'- and 5'-phosphates. This chain is Formamidopyrimidine-DNA glycosylase, found in Trichormus variabilis (strain ATCC 29413 / PCC 7937) (Anabaena variabilis).